Consider the following 1456-residue polypeptide: Putative 1-phosphatidylinositol-3-phosphate 5-kinase FAB1D (1456 aa).

Residues 1–19 show a composition bias toward low complexity; it reads MTPSNSLSSSERSLSGECS. 6 disordered regions span residues 1-110, 533-592, 925-944, 967-987, 1003-1022, and 1137-1159; these read MTPS…EVDG, PVSV…NDIE, ENDNKVSDSGSNGGIDTPLV, VPEDNESQTLCSSSPDTTSPI, NGQEADKSIPVTGESLDDEV, and NNQDSKQTDRDVSRFSSESTNRL. The segment covering 43-57 has biased composition (basic and acidic residues); that stretch reads ELTKEVKVDRLERKS. Residues 86-110 are compositionally biased toward acidic residues; it reads REDDSDDVPVWEPPEPENPEDEVDG. Over residues 533-544 the composition is skewed to low complexity; the sequence is PVSVDTDVSTTS. Positions 973 to 987 are enriched in polar residues; that stretch reads SQTLCSSSPDTTSPI. Residues 1115 to 1443 form the PIPK domain; it reads NNEESKKPLS…RFRKFMKTHF (329 aa). The span at 1150-1159 shows a compositional bias: polar residues; it reads RFSSESTNRL.

As to quaternary structure, component of the PI(3,5)P2 regulatory complex at least composed of ATG18, SAC/FIG4, FAB1 and VAC14. It depends on Mg(2+) as a cofactor. Requires Mn(2+) as cofactor.

The catalysed reaction is a 1,2-diacyl-sn-glycero-3-phospho-(1D-myo-inositol-3-phosphate) + ATP = a 1,2-diacyl-sn-glycero-3-phospho-(1D-myo-inositol-3,5-bisphosphate) + ADP + H(+). In terms of biological role, the PI(3,5)P2 regulatory complex regulates both the synthesis and turnover of phosphatidylinositol 3,5-bisphosphate (PtdIns(3,5)P2). Catalyzes the phosphorylation of phosphatidylinositol 3-phosphate on the fifth hydroxyl of the myo-inositol ring, to form phosphatidylinositol 3,5-bisphosphate. The chain is Putative 1-phosphatidylinositol-3-phosphate 5-kinase FAB1D (FAB1D) from Arabidopsis thaliana (Mouse-ear cress).